A 1215-amino-acid chain; its full sequence is Homeodomain-interacting protein kinase 3 (1215 aa).

A Glycyl lysine isopeptide (Lys-Gly) (interchain with G-Cter in SUMO2) cross-link involves residue K27. Residues 197–525 (YEVLDFLGRG…PAETLNHPFV (329 aa)) enclose the Protein kinase domain. Residues 203 to 211 (LGRGTFGQV) and K226 contribute to the ATP site. D322 acts as the Proton acceptor in catalysis. The residue at position 359 (Y359) is a Phosphotyrosine. Residues 767–944 (QNRGILVKLM…NSMSDEEQES (178 aa)) form an interaction with AR region. Residues 796 to 891 (NTNIPHSAFI…SQRHSLRECK (96 aa)) are interaction with FAS. The segment at 855-1011 (QTIIIADSPS…ENGLNADEHM (157 aa)) is required for localization to nuclear speckles. Residues 866-918 (AVSVITISSDTDEEETSQRHSLRECKGSLDCEACQSTLNIDRMCSLSSPDSTL) are SUMO interaction motifs (SIM); required for nuclear localization and kinase activity. Residues 870–880 (ITISSDTDEEE) are interaction with UBL1. Residues 912-929 (SSPDSTLSTSSSGQSSPS) are compositionally biased toward low complexity. The interval 912–987 (SSPDSTLSTS…ELVSSADTET (76 aa)) is disordered. A compositionally biased stretch (polar residues) spans 945–957 (SCDTVDGSPTSDS). K1208 is covalently cross-linked (Glycyl lysine isopeptide (Lys-Gly) (interchain with G-Cter in SUMO)).

It belongs to the protein kinase superfamily. CMGC Ser/Thr protein kinase family. HIPK subfamily. In terms of assembly, interacts with Nkx1-2. Interacts with FAS and DAXX. Probably part of a complex consisting of HIPK3, FAS and FADD. Interacts with and stabilizes ligand-bound androgen receptor (AR). Interacts with UBL1/SUMO-1. Binds to NR5A1/SF1, SPEN/MINT and RUNX2. Post-translationally, autophosphorylated, but autophosphorylation is not required for catalytic activity. May be sumoylated. In terms of tissue distribution, overexpressed in multidrug resistant cells. Highly expressed in heart and skeletal muscle, and at lower levels in placenta, pancreas, brain, spleen, prostate, thymus, testis, small intestine, colon and leukocytes. Not found in liver and lung.

It is found in the cytoplasm. It localises to the nucleus. The enzyme catalyses L-seryl-[protein] + ATP = O-phospho-L-seryl-[protein] + ADP + H(+). It carries out the reaction L-threonyl-[protein] + ATP = O-phospho-L-threonyl-[protein] + ADP + H(+). Functionally, serine/threonine-protein kinase involved in transcription regulation, apoptosis and steroidogenic gene expression. Phosphorylates JUN and RUNX2. Seems to negatively regulate apoptosis by promoting FADD phosphorylation. Enhances androgen receptor-mediated transcription. May act as a transcriptional corepressor for NK homeodomain transcription factors. The phosphorylation of NR5A1 activates SF1 leading to increased steroidogenic gene expression upon cAMP signaling pathway stimulation. In osteoblasts, supports transcription activation: phosphorylates RUNX2 that synergizes with SPEN/MINT to enhance FGFR2-mediated activation of the osteocalcin FGF-responsive element (OCFRE). The protein is Homeodomain-interacting protein kinase 3 (HIPK3) of Homo sapiens (Human).